A 545-amino-acid polypeptide reads, in one-letter code: Transducer protein Htr7 (545 aa).

3 consecutive transmembrane segments (helical) span residues 10-30, 44-64, and 80-100; these read AVVA…AAAL, FWMA…SLML, and PLMA…LAIV. The tract at residues 111 to 157 is disordered; it reads AQRRQEAEEERAEAERAREKAEQKQAEAERQTAEAESAKQDARERSA. A compositionally biased stretch (basic and acidic residues) spans 123-157; the sequence is EAERAREKAEQKQAEAERQTAEAESAKQDARERSA. Residues 164-217 form the HAMP domain; it reads ADLESQATEVGATLEAASDGDLTARVDATTDNAEIAEVATVVNDMLTTMERTID. Residues 236-476 form the Methyl-accepting transducer domain; it reads GAKEIQDASQ…RVVSSVDDIA (241 aa). Glutamate 281 carries the glutamate methyl ester (Glu) modification. A disordered region spans residues 521–545; it reads LNEFRTEATGTAHGEATDAPAGQSD. Positions 527–539 are enriched in low complexity; the sequence is EATGTAHGEATDA.

It belongs to the methyl-accepting chemotaxis (MCP) protein family. Methylated by CheR.

Its subcellular location is the cell membrane. Potentially involved in chemo- or phototactic signal transduction. The chain is Transducer protein Htr7 (htr7) from Halobacterium salinarum (strain ATCC 29341 / DSM 671 / R1).